Here is a 90-residue protein sequence, read N- to C-terminus: Small ribosomal subunit protein uS15c (90 aa).

The protein belongs to the universal ribosomal protein uS15 family. As to quaternary structure, part of the 30S ribosomal subunit.

The protein resides in the plastid. Its subcellular location is the chloroplast. The polypeptide is Small ribosomal subunit protein uS15c (rps15-A) (Ipomoea purpurea (Common morning glory)).